Consider the following 49-residue polypeptide: MRVKITLACTETGDRNYITTKNKRTNPDRLELKKYSPRLKKYTLHRETK.

Belongs to the bacterial ribosomal protein bL33 family.

The chain is Large ribosomal subunit protein bL33C from Bacillus pumilus (strain SAFR-032).